The sequence spans 853 residues: DNA mismatch repair protein MutS (853 aa).

Gly-614 to Ser-621 contacts ATP.

The protein belongs to the DNA mismatch repair MutS family.

Functionally, this protein is involved in the repair of mismatches in DNA. It is possible that it carries out the mismatch recognition step. This protein has a weak ATPase activity. The chain is DNA mismatch repair protein MutS from Escherichia coli O6:H1 (strain CFT073 / ATCC 700928 / UPEC).